The primary structure comprises 297 residues: Bifunctional protein FolD 1 (297 aa).

NADP(+) is bound by residues 174–176 (GRS), Ser-199, and Ile-240.

Belongs to the tetrahydrofolate dehydrogenase/cyclohydrolase family. Homodimer.

The catalysed reaction is (6R)-5,10-methylene-5,6,7,8-tetrahydrofolate + NADP(+) = (6R)-5,10-methenyltetrahydrofolate + NADPH. It carries out the reaction (6R)-5,10-methenyltetrahydrofolate + H2O = (6R)-10-formyltetrahydrofolate + H(+). Its pathway is one-carbon metabolism; tetrahydrofolate interconversion. Its function is as follows. Catalyzes the oxidation of 5,10-methylenetetrahydrofolate to 5,10-methenyltetrahydrofolate and then the hydrolysis of 5,10-methenyltetrahydrofolate to 10-formyltetrahydrofolate. This is Bifunctional protein FolD 1 from Acinetobacter baylyi (strain ATCC 33305 / BD413 / ADP1).